A 126-amino-acid polypeptide reads, in one-letter code: Acidic phospholipase A2 4 (126 aa).

A signal peptide is located at residue Ser-1. The propeptide occupies 2–7 (NRPMPL). 7 disulfide bridges follow: Cys-18–Cys-78, Cys-33–Cys-125, Cys-35–Cys-51, Cys-50–Cys-106, Cys-57–Cys-99, Cys-67–Cys-92, and Cys-85–Cys-97. The Ca(2+) site is built by Tyr-34, Gly-36, and Gly-38. The active site involves His-54. Residue Asp-55 participates in Ca(2+) binding. Asp-100 is an active-site residue.

This sequence belongs to the phospholipase A2 family. Group I subfamily. D49 sub-subfamily. In terms of assembly, monomer. Ca(2+) serves as cofactor. Expressed by the venom gland.

Its subcellular location is the secreted. It carries out the reaction a 1,2-diacyl-sn-glycero-3-phosphocholine + H2O = a 1-acyl-sn-glycero-3-phosphocholine + a fatty acid + H(+). In terms of biological role, snake venom phospholipase A2 (PLA2) that exhibits strong anticoagulant activity, which is not due to the catalytic activity. PLA2 catalyzes the calcium-dependent hydrolysis of the 2-acyl groups in 3-sn-phosphoglycerides. The sequence is that of Acidic phospholipase A2 4 from Naja sagittifera (Andaman cobra).